A 522-amino-acid polypeptide reads, in one-letter code: 2-isopropylmalate synthase (522 aa).

Residues 5 to 267 form the Pyruvate carboxyltransferase domain; that stretch reads VIIFDTTLRD…ETGINAKEIH (263 aa). Residues aspartate 14, histidine 202, histidine 204, and asparagine 238 each contribute to the Mn(2+) site. Residues 392–522 are regulatory domain; sequence QLQQLVVQSD…MQKNRELGGV (131 aa).

Belongs to the alpha-IPM synthase/homocitrate synthase family. LeuA type 1 subfamily. As to quaternary structure, homodimer. Mn(2+) serves as cofactor.

The protein resides in the cytoplasm. The catalysed reaction is 3-methyl-2-oxobutanoate + acetyl-CoA + H2O = (2S)-2-isopropylmalate + CoA + H(+). It participates in amino-acid biosynthesis; L-leucine biosynthesis; L-leucine from 3-methyl-2-oxobutanoate: step 1/4. In terms of biological role, catalyzes the condensation of the acetyl group of acetyl-CoA with 3-methyl-2-oxobutanoate (2-ketoisovalerate) to form 3-carboxy-3-hydroxy-4-methylpentanoate (2-isopropylmalate). The sequence is that of 2-isopropylmalate synthase from Shewanella baltica (strain OS223).